Consider the following 573-residue polypeptide: Formate--tetrahydrofolate ligase 3 (573 aa).

66-73 (TPLGEGKT) is an ATP binding site.

It belongs to the formate--tetrahydrofolate ligase family.

The catalysed reaction is (6S)-5,6,7,8-tetrahydrofolate + formate + ATP = (6R)-10-formyltetrahydrofolate + ADP + phosphate. It participates in one-carbon metabolism; tetrahydrofolate interconversion. The sequence is that of Formate--tetrahydrofolate ligase 3 from Rubrobacter xylanophilus (strain DSM 9941 / JCM 11954 / NBRC 16129 / PRD-1).